The following is a 226-amino-acid chain: Gap junction beta-2 protein (226 aa).

Residues 2-13 (DWSALQTILGGV) lie within the membrane without spanning it. Residues 14 to 20 (NKHSTSI) are Cytoplasmic-facing. Residues 21–40 (GKIWLTVLFIFRIMILVVAA) traverse the membrane as a helical segment. The Extracellular portion of the chain corresponds to 41–73 (KEVWGDEQADFVCNTLQPGCKNVCYDHYFPISH). 3 residues coordinate Ca(2+): Glu-42, Gly-45, and Glu-47. Cystine bridges form between Cys-53/Cys-180, Cys-60/Cys-174, and Cys-64/Cys-169. Residues 74–94 (IRLWALQLIFVSTPALLVAMH) traverse the membrane as a helical segment. The Cytoplasmic segment spans residues 95-135 (VAYYRHEKKRKFIRGEIKTEFKDIEEIKNQKVRIEGSLWWT). The chain crosses the membrane as a helical span at residues 136 to 156 (YTGSIFFRVIFEAAFMYVFYV). Topologically, residues 157 to 189 (MYDGFAMQRLVKCNAWPCPNTVDCFVSRPTEKT) are extracellular. The helical transmembrane segment at 190-210 (VFTVFMIAVSGICILLNVTEL) threads the bilayer. The Cytoplasmic portion of the chain corresponds to 211 to 226 (CYLLIRFCSGKSKKPV).

It belongs to the connexin family. Beta-type (group I) subfamily. In terms of assembly, a hemichannel or connexon is composed of a hexamer of connexins. A functional gap junction is formed by the apposition of two hemichannels. Forms heteromeric channels with GJB4. Interacts with CNST.

Its subcellular location is the cell membrane. The protein localises to the cell junction. It localises to the gap junction. Structural component of gap junctions. Gap junctions are dodecameric channels that connect the cytoplasm of adjoining cells. They are formed by the docking of two hexameric hemichannels, one from each cell membrane. Small molecules and ions diffuse from one cell to a neighboring cell via the central pore. The protein is Gap junction beta-2 protein (GJB2) of Ovis aries (Sheep).